Consider the following 214-residue polypeptide: MRILDLFSGTHSVPKACAQREGWSCVTVDLADSDYNVDVLEWDYTKDLKPREFDVVWASPPCRYFSKLRESNIGRGGMTKKSVKEDLETKGLPLLRRAMEIIAYLQPKKFIVENPDTGRMKEYITEWPHYVVDYCAYSDWGYRKRTRLWTDIEGFVPKTCAGKESCPNMERNPSSGRWRHVLATDAGGRGRKGTTRRLRYRVPPAIIVELLDLC.

The active site involves cysteine 62.

Belongs to the class I-like SAM-binding methyltransferase superfamily. C5-methyltransferase family. In terms of assembly, probably requires another subunit for function.

The enzyme catalyses a 2'-deoxycytidine in DNA + S-adenosyl-L-methionine = a 5-methyl-2'-deoxycytidine in DNA + S-adenosyl-L-homocysteine + H(+). This is probably the methylase that recognizes and modifies 5'-CpG-3'. This is Probable DNA (cytosine-5)-methyltransferase from Dryophytes versicolor (chameleon treefrog).